A 1214-amino-acid chain; its full sequence is Sodium bicarbonate cotransporter 3 (1214 aa).

The span at 1 to 12 (MERFRLEKKLPG) shows a compositional bias: basic and acidic residues. Disordered regions lie at residues 1-22 (MERFRLEKKLPGPDEEAVVDLG) and 52-93 (SKES…PSQR). Over 1-608 (MERFRLEKKL…DFKDALSLQC (608 aa)) the chain is Extracellular. Phosphoserine is present on residues S52, S55, S84, S150, L165, and C168. The segment covering 55 to 72 (SRRRHRHRGHKHHHRRRK) has biased composition (basic residues). A compositionally biased stretch (basic and acidic residues) spans 73–85 (DKESDKEDGRESP). N171 is a glycosylation site (N-linked (GlcNAc...) asparagine). S233, S242, S255, R258, S260, T263, G264, and A267 each carry phosphoserine. An N-linked (GlcNAc...) asparagine glycan is attached at N269. Disordered regions lie at residues 289–346 (SRAG…IPTV), 362–408 (EEQK…ENST), and 552–572 (FHNGSTPTLGETPKEAAHHAG). Residues 303–313 (VPTPQNSPPSS) are compositionally biased toward pro residues. Low complexity predominate over residues 314 to 332 (PSISRLTSRSSQESQRQAP). Residues 379–392 (SPQSAPGNLDNSKS) are compositionally biased toward polar residues. At S382 the chain carries Phosphoserine. N-linked (GlcNAc...) asparagine glycosylation occurs at N398. S400 and S403 each carry phosphoserine. The N-linked (GlcNAc...) asparagine glycan is linked to N406. S407 and S556 each carry phosphoserine. T557 bears the Phosphothreonine mark. Residues 563–572 (TPKEAAHHAG) show a composition bias toward basic and acidic residues. A helical membrane pass occupies residues 609–629 (LASILFLYCACMSPVITFGGL). The Cytoplasmic segment spans residues 630 to 637 (LGEATEGR). Residues 638 to 658 (ISAIESLFGASLTGIAYSLFA) form a helical membrane-spanning segment. The Extracellular portion of the chain corresponds to 659–695 (GQPLTILGSTGPVLVFEKILYKFCRDYQLSYLSLRTS). The helical transmembrane segment at 696–716 (IGLWTSFLCIVLVATDASSLV) threads the bilayer. Residues 717–725 (CYITRFTEE) are Cytoplasmic-facing. A helical membrane pass occupies residues 726-746 (AFAALICIIFIYEALEKLFDL). Position 742 is a phosphoserine (K742). Topologically, residues 747 to 817 (GETYAFNMHN…VFLGSACGHH (71 aa)) are extracellular. The cysteines at positions 766 and 768 are disulfide-linked. P771 and P774 each carry phosphoserine. N776 carries N-linked (GlcNAc...) asparagine glycosylation. Residue A780 is modified to Phosphoserine. Residues N786 and N791 are each glycosylated (N-linked (GlcNAc...) asparagine). C802 and C814 are oxidised to a cystine. The helical transmembrane segment at 818–838 (GPYIPDVLFWCVILFFTTFFL) threads the bilayer. Residues 839-861 (SSFLKQFKTKRYFPTKVRSTISD) are Cytoplasmic-facing. Residues 862 to 882 (FAVFLTIVIMVTIDYLVGVPS) form a helical membrane-spanning segment. Residues 883–908 (PKLHVPEKFEPTHPERGWIISPLGDN) are Extracellular-facing. A helical transmembrane segment spans residues 909–929 (PWWTLLIAAIPALLCTILIFM). Residues 930-954 (DQQITAVIINRKEHKLKKGAGYHLD) are Cytoplasmic-facing. The chain crosses the membrane as a helical span at residues 955–975 (LLMVGVMLGVCSVMGLPWFVA). Over 976–1011 (ATVLSISHVNSLKVESECSAPGEQPKFLGIREQRVT) the chain is Extracellular. Phosphoserine occurs at positions 1007, 1010, and 1016. 2 essential for cell membrane localization and transport activity regions span residues 1008 to 1131 (QRVT…KREL) and 1127 to 1214 (TKRE…ETSL). The chain crosses the membrane as a helical span at residues 1012–1032 (GLMIFILMGLSVFMTSVLKFI). At 1033–1034 (PM) the chain is on the cytoplasmic side. Residues 1035 to 1055 (PVLYGVFLYMGVSSLKGIQLF) traverse the membrane as a helical segment. The Extracellular segment spans residues 1056–1092 (DRIKLFGMPAKHQPDLIYLRYVPLWKVHIFTVIQLTC). Residues Y1073, V1077, S1102, A1105, V1106, P1109, M1111, and L1115 each carry the phosphoserine modification. Residues 1093–1113 (LVLLWVIKVSAAAVVFPMMVL) form a helical membrane-spanning segment. The Cytoplasmic portion of the chain corresponds to 1114–1214 (ALVFVRKLMD…KKYVDAETSL (101 aa)). The interval 1134–1136 (LDD) is CA2-binding. Positions 1144 to 1162 (KKEDDKKKKEKEEAERMLQ) are enriched in basic and acidic residues. The segment at 1144–1169 (KKEDDKKKKEKEEAERMLQDDDDTVH) is disordered. A Phosphothreonine modification is found at T1167. S1176, S1188, D1201, and S1213 each carry phosphoserine. The PDZ-binding signature appears at 1211–1214 (ETSL).

It belongs to the anion exchanger (TC 2.A.31) family. Interacts with CFTR through NHERF1/EBP50. Interacts with USH1C. Forms a complex with ATP6V1B1 and NHERF1/EBP50. Interacts in a pH dependent-manner with CA2/carbonic anhydrase 2. As to expression, highly expressed in testis and spleen. Also expressed in retina, colon, small intestine, ovary, thymus, prostate, muscle, heart and kidney. In terms of tissue distribution, expressed in skeletal muscle and heart muscle.

The protein localises to the basolateral cell membrane. It is found in the apical cell membrane. It localises to the cell projection. Its subcellular location is the stereocilium. The protein resides in the cell membrane. The catalysed reaction is hydrogencarbonate(in) + Na(+)(in) = hydrogencarbonate(out) + Na(+)(out). With respect to regulation, transporter activity is regulated by CA2/carbonic anhydrase 2, cAMP and PKA. Insensitive to stilbene derivatives. Inhibited by 5-(N-ethyl-N-isopropyl)-amiloride (EIPA). In terms of biological role, electroneutral sodium- and bicarbonate-dependent cotransporter with a Na(+):HCO3(-) 1:1 stoichiometry. Mediates the sodium-dependent bicarbonate transport important for pH recovery after acid load as well as for regulation of steady-state pH in the duodenum and vascular smooth muscle cells. Plays a key role in macrophage acidification, mediating bicarbonate import into the cytoplasm which is crucial for net acid extrusion and maintenance of cytoplasmic pH during phagocytosis. Provides cellular bicarbonate for de novo purine and pyrimidine synthesis and is a key mediator of de novo nucleotide synthesis downstream of mTORC1 signaling in proliferating cells. Plays a key role in macrophage acidification, mediating bicarbonate import into the cytoplasm which is crucial for net acid extrusion and maintenance of cytoplasmic pH during phagocytosis. This is Sodium bicarbonate cotransporter 3 (SLC4A7) from Homo sapiens (Human).